The chain runs to 287 residues: Nucleotide-binding protein Gbem_0872 (287 aa).

8–15 (GLSGSGKS) contributes to the ATP binding site. Residue 59–62 (DIRS) participates in GTP binding.

The protein belongs to the RapZ-like family.

Its function is as follows. Displays ATPase and GTPase activities. The protein is Nucleotide-binding protein Gbem_0872 of Citrifermentans bemidjiense (strain ATCC BAA-1014 / DSM 16622 / JCM 12645 / Bem) (Geobacter bemidjiensis).